The sequence spans 193 residues: dCTP deaminase (193 aa).

DCTP is bound by residues 110-115 (RSSLAR), aspartate 128, 136-138 (VLE), tyrosine 171, lysine 178, and glutamine 182. Catalysis depends on glutamate 138, which acts as the Proton donor/acceptor. A disordered region spans residues 171–193 (YHQRQDAKYHNQKGAVASRIDKD).

It belongs to the dCTP deaminase family. Homotrimer.

The catalysed reaction is dCTP + H2O + H(+) = dUTP + NH4(+). It functions in the pathway pyrimidine metabolism; dUMP biosynthesis; dUMP from dCTP (dUTP route): step 1/2. Catalyzes the deamination of dCTP to dUTP. The chain is dCTP deaminase from Hamiltonella defensa subsp. Acyrthosiphon pisum (strain 5AT).